We begin with the raw amino-acid sequence, 372 residues long: Alanine racemase (372 aa).

The active-site Proton acceptor; specific for D-alanine is the Lys36. Lys36 is modified (N6-(pyridoxal phosphate)lysine). Residue Arg134 participates in substrate binding. The Proton acceptor; specific for L-alanine role is filled by Tyr266. Met314 contacts substrate.

Belongs to the alanine racemase family. The cofactor is pyridoxal 5'-phosphate.

The enzyme catalyses L-alanine = D-alanine. It functions in the pathway amino-acid biosynthesis; D-alanine biosynthesis; D-alanine from L-alanine: step 1/1. In terms of biological role, catalyzes the interconversion of L-alanine and D-alanine. May also act on other amino acids. The polypeptide is Alanine racemase (alr) (Nitratidesulfovibrio vulgaris (strain DSM 19637 / Miyazaki F) (Desulfovibrio vulgaris)).